The following is a 596-amino-acid chain: Aspartate--tRNA(Asp/Asn) ligase (596 aa).

Residue Glu-175 participates in L-aspartate binding. The segment at 199–202 is aspartate; sequence QQYK. L-aspartate contacts are provided by Arg-221 and His-454. 221–223 serves as a coordination point for ATP; that stretch reads RDE. Glu-488 contacts ATP. Arg-495 contacts L-aspartate. Position 540-543 (540-543) interacts with ATP; it reads GIDR.

Belongs to the class-II aminoacyl-tRNA synthetase family. Type 1 subfamily. Homodimer.

The protein resides in the cytoplasm. It carries out the reaction tRNA(Asx) + L-aspartate + ATP = L-aspartyl-tRNA(Asx) + AMP + diphosphate. Its function is as follows. Aspartyl-tRNA synthetase with relaxed tRNA specificity since it is able to aspartylate not only its cognate tRNA(Asp) but also tRNA(Asn). Reaction proceeds in two steps: L-aspartate is first activated by ATP to form Asp-AMP and then transferred to the acceptor end of tRNA(Asp/Asn). This Mesorhizobium japonicum (strain LMG 29417 / CECT 9101 / MAFF 303099) (Mesorhizobium loti (strain MAFF 303099)) protein is Aspartate--tRNA(Asp/Asn) ligase.